Consider the following 138-residue polypeptide: Putative nickel-responsive regulator (138 aa).

H78, H89, H91, and C97 together coordinate Ni(2+).

This sequence belongs to the transcriptional regulatory CopG/NikR family. The cofactor is Ni(2+).

Its function is as follows. Transcriptional regulator. The sequence is that of Putative nickel-responsive regulator from Thermococcus onnurineus (strain NA1).